The following is a 617-amino-acid chain: Chaperone protein DnaK (617 aa).

Residues 579-617 form a disordered region; the sequence is KAQQEAQQASGEAGSADARGPDETVVDADYEVVDDEKRK. Residues 580 to 594 show a composition bias toward low complexity; the sequence is AQQEAQQASGEAGSA. Residues 602–617 show a composition bias toward acidic residues; that stretch reads TVVDADYEVVDDEKRK.

It belongs to the heat shock protein 70 family.

Functionally, acts as a chaperone. In Methanosarcina acetivorans (strain ATCC 35395 / DSM 2834 / JCM 12185 / C2A), this protein is Chaperone protein DnaK.